A 660-amino-acid polypeptide reads, in one-letter code: Leucine-rich repeat transmembrane protein FLRT2 (660 aa).

An N-terminal signal peptide occupies residues Met-1–Ala-35. 2 disulfide bridges follow: Cys-36/Cys-42 and Cys-40/Cys-49. Residues Cys-36 to Val-67 form the LRRNT domain. Residues Cys-36–Pro-540 lie on the Extracellular side of the membrane. 10 LRR repeats span residues Pro-62 to Val-87, Gln-88 to Pro-108, Lys-109 to Gln-131, Leu-132 to Glu-157, Ile-159 to Asp-181, Gln-183 to Asn-202, Leu-203 to His-228, Leu-229 to Gly-251, Thr-252 to Asn-274, and Leu-275 to His-298. Asn-202 carries N-linked (GlcNAc...) asparagine glycosylation. Cystine bridges form between Cys-314-Cys-339 and Cys-316-Cys-360. Residues Met-338–Pro-361 form the LRRCT domain. Residues Pro-372–Val-396 show a composition bias toward low complexity. Positions Pro-372–Gly-413 are disordered. The region spanning Pro-419 to Ser-517 is the Fibronectin type-III domain. Residues Phe-541–Val-561 traverse the membrane as a helical segment. The Cytoplasmic portion of the chain corresponds to Phe-562 to Thr-660.

As to quaternary structure, self-associates (via leucine-rich repeats), giving rise to homooligomers. Interacts with FGFR1. Interacts with FGFR2. Interacts (via extracellular domain) with ADGRL1/LPHN1. Interacts (via extracellular domain) with ADGRL3 (via olfactomedin-like domain). Interacts (via extracellular domain) with UNC5D (via the first Ig-like domain). Can also interact (via extracellular domain) with UNC5B, but with much lower affinity. Interacts (via extracellular domain) with FN1. N-glycosylated. Post-translationally, proteolytic cleavage in the juxtamembrane region gives rise to a soluble ectodomain. Cleavage is probably effected by a metalloprotease. In terms of tissue distribution, detected in brain (at protein level).

The protein localises to the cell membrane. Its subcellular location is the endoplasmic reticulum membrane. The protein resides in the synapse. It is found in the synaptosome. It localises to the cell junction. The protein localises to the focal adhesion. Its subcellular location is the secreted. The protein resides in the extracellular space. It is found in the extracellular matrix. It localises to the microsome membrane. Its function is as follows. Functions in cell-cell adhesion, cell migration and axon guidance. Mediates cell-cell adhesion via its interactions with ADGRL3 and probably also other latrophilins that are expressed at the surface of adjacent cells. May play a role in the migration of cortical neurons during brain development via its interaction with UNC5D. Mediates axon growth cone collapse and plays a repulsive role in neuron guidance via its interaction with UNC5D, and possibly also other UNC-5 family members. Plays a role in fibroblast growth factor-mediated signaling cascades. Required for normal organization of the cardiac basement membrane during embryogenesis, and for normal embryonic epicardium and heart morphogenesis. This chain is Leucine-rich repeat transmembrane protein FLRT2, found in Rattus norvegicus (Rat).